Reading from the N-terminus, the 145-residue chain is Protein SprT-like (145 aa).

Positions 5–141 (DYVREVSLAD…CGRCHGRLIK (137 aa)) constitute a SprT-like domain. Residue H64 participates in Zn(2+) binding. Residue E65 is part of the active site. Residue H68 coordinates Zn(2+).

The protein belongs to the SprT family. It depends on Zn(2+) as a cofactor.

The protein resides in the cytoplasm. This Streptococcus equi subsp. zooepidemicus (strain H70) protein is Protein SprT-like.